Here is a 206-residue protein sequence, read N- to C-terminus: Large ribosomal subunit protein eL13x (206 aa).

The disordered stretch occupies residues 186–206 (NARHAGARAKRAAEAEKEEKK). The segment covering 196–206 (RAAEAEKEEKK) has biased composition (basic and acidic residues).

This sequence belongs to the eukaryotic ribosomal protein eL13 family.

The chain is Large ribosomal subunit protein eL13x (RPL13D) from Arabidopsis thaliana (Mouse-ear cress).